Consider the following 845-residue polypeptide: U-box domain-containing protein 52 (845 aa).

2 disordered regions span residues 180-210 and 229-258; these read RPSE…LPPE and SPAL…EVST. A compositionally biased stretch (low complexity) spans 187 to 204; sequence SGSIRFERSSSTSGSTDS. The segment covering 236 to 251 has biased composition (polar residues); sequence MGSNAVAQMDTSSSGT. Residues 351–468 adopt a coiled-coil conformation; sequence SITDNQVNLN…REKDKLQASL (118 aa). The Protein kinase domain occupies 490–754; it reads FAENLKIGIG…DLKDQIIPAL (265 aa). ATP-binding positions include 496-504 and K517; that span reads IGIGAYGSV. D612 functions as the Proton acceptor in the catalytic mechanism. Positions 774-845 constitute a U-box domain; it reads GPPSHFICPL…AIMEWKSNKR (72 aa).

Belongs to the protein kinase superfamily. Ser/Thr protein kinase family.

It carries out the reaction L-seryl-[protein] + ATP = O-phospho-L-seryl-[protein] + ADP + H(+). It catalyses the reaction L-threonyl-[protein] + ATP = O-phospho-L-threonyl-[protein] + ADP + H(+). The enzyme catalyses S-ubiquitinyl-[E2 ubiquitin-conjugating enzyme]-L-cysteine + [acceptor protein]-L-lysine = [E2 ubiquitin-conjugating enzyme]-L-cysteine + N(6)-ubiquitinyl-[acceptor protein]-L-lysine.. The protein operates within protein modification; protein ubiquitination. In terms of biological role, functions as an E3 ubiquitin ligase. The chain is U-box domain-containing protein 52 (PUB52) from Arabidopsis thaliana (Mouse-ear cress).